We begin with the raw amino-acid sequence, 256 residues long: Major prion protein (256 aa).

The N-terminal stretch at 1 to 24 (MVKSHIGSWILVLFVAMWSDVGLC) is a signal peptide. The segment at 25 to 41 (KKRPKPGGGWNTGGSRY) is interaction with ADGRG6. Positions 25–233 (KKRPKPGGGW…ESEAYYQRRA (209 aa)) are interaction with GRB2, ERI3 and SYN1. The tract at residues 28-110 (PKPGGGWNTG…QWNKPSKPKT (83 aa)) is disordered. Repeat copies occupy residues 54–62 (PQGGGGWGQ), 63–70 (PHGGGWGQ), 71–78 (PHGGGWGQ), 79–86 (PHGGGWGQ), and 87–95 (PHGGGGWGQ). The tract at residues 54–95 (PQGGGGWGQPHGGGWGQPHGGGWGQPHGGGWGQPHGGGGWGQ) is 5 X 8 AA tandem repeats of P-H-G-G-G-W-G-Q. Residues 55-97 (QGGGGWGQPHGGGWGQPHGGGWGQPHGGGWGQPHGGGGWGQGG) are compositionally biased toward gly residues. Residues histidine 64, glycine 65, glycine 66, histidine 72, glycine 73, glycine 74, histidine 80, glycine 81, glycine 82, histidine 88, glycine 90, and glycine 91 each contribute to the Cu(2+) site. A disulfide bond links cysteine 182 and cysteine 217. 2 N-linked (GlcNAc...) asparagine glycosylation sites follow: asparagine 184 and asparagine 200. Residue alanine 233 is the site of GPI-anchor amidated alanine attachment. The propeptide at 234–256 (SAILFSSPPVILLISFLIFLIVG) is removed in mature form.

It belongs to the prion family. In terms of assembly, monomer and homodimer. Has a tendency to aggregate into amyloid fibrils containing a cross-beta spine, formed by a steric zipper of superposed beta-strands. Soluble oligomers may represent an intermediate stage on the path to fibril formation. Copper binding may promote oligomerization. Interacts with GRB2, APP, ERI3/PRNPIP and SYN1. Mislocalized cytosolically exposed PrP interacts with MGRN1; this interaction alters MGRN1 subcellular location and causes lysosomal enlargement. Interacts with APP. Interacts with KIAA1191. Interacts with ADGRG6.

It localises to the cell membrane. The protein localises to the golgi apparatus. Its primary physiological function is unclear. May play a role in neuronal development and synaptic plasticity. May be required for neuronal myelin sheath maintenance. May promote myelin homeostasis through acting as an agonist for ADGRG6 receptor. May play a role in iron uptake and iron homeostasis. Soluble oligomers are toxic to cultured neuroblastoma cells and induce apoptosis (in vitro). Association with GPC1 (via its heparan sulfate chains) targets PRNP to lipid rafts. Also provides Cu(2+) or Zn(2+) for the ascorbate-mediated GPC1 deaminase degradation of its heparan sulfate side chains. This chain is Major prion protein (PRNP), found in Felis catus (Cat).